A 74-amino-acid chain; its full sequence is ATP synthase subunit c (74 aa).

2 consecutive transmembrane segments (helical) span residues 5–25 (LAHI…IGVG) and 49–69 (LFIG…VALL).

It belongs to the ATPase C chain family. As to quaternary structure, F-type ATPases have 2 components, F(1) - the catalytic core - and F(0) - the membrane proton channel. F(1) has five subunits: alpha(3), beta(3), gamma(1), delta(1), epsilon(1). F(0) has four main subunits: a(1), b(1), b'(1) and c(10-14). The alpha and beta chains form an alternating ring which encloses part of the gamma chain. F(1) is attached to F(0) by a central stalk formed by the gamma and epsilon chains, while a peripheral stalk is formed by the delta, b and b' chains.

The protein localises to the cell inner membrane. Its function is as follows. F(1)F(0) ATP synthase produces ATP from ADP in the presence of a proton or sodium gradient. F-type ATPases consist of two structural domains, F(1) containing the extramembraneous catalytic core and F(0) containing the membrane proton channel, linked together by a central stalk and a peripheral stalk. During catalysis, ATP synthesis in the catalytic domain of F(1) is coupled via a rotary mechanism of the central stalk subunits to proton translocation. Functionally, key component of the F(0) channel; it plays a direct role in translocation across the membrane. A homomeric c-ring of between 10-14 subunits forms the central stalk rotor element with the F(1) delta and epsilon subunits. This chain is ATP synthase subunit c, found in Roseobacter denitrificans (strain ATCC 33942 / OCh 114) (Erythrobacter sp. (strain OCh 114)).